The primary structure comprises 185 residues: Urease accessory protein UreE (185 aa).

The disordered stretch occupies residues 153–185; that stretch reads LRANSAQGHGHSHSHSHDHHGYHHHGDGNWHKH. Residues 162–175 show a composition bias toward basic residues; the sequence is GHSHSHSHDHHGYH. Residues 176 to 185 are compositionally biased toward basic and acidic residues; that stretch reads HHGDGNWHKH.

Belongs to the UreE family.

It is found in the cytoplasm. Involved in urease metallocenter assembly. Binds nickel. Probably functions as a nickel donor during metallocenter assembly. This chain is Urease accessory protein UreE, found in Haemophilus influenzae (strain PittGG).